Here is a 512-residue protein sequence, read N- to C-terminus: Glutathione-binding protein GsiB (512 aa).

Residues 1 to 26 form the signal peptide; it reads MARAVHRSGLVALGIATALMASCAFA.

Belongs to the bacterial solute-binding protein 5 family. In terms of assembly, the complex is composed of two ATP-binding proteins (GsiA), two transmembrane proteins (GsiC and GsiD) and a solute-binding protein (GsiB).

Its subcellular location is the periplasm. In terms of biological role, part of the ABC transporter complex GsiABCD involved in glutathione import. Binds glutathione. The protein is Glutathione-binding protein GsiB of Escherichia coli O1:K1 / APEC.